We begin with the raw amino-acid sequence, 245 residues long: MSTNPKPAFRRILLKLSGEALMGDEGFGIDPKVLDRMAQEVKELVELGIQVGVVIGGGNLFRGEGLAKAGMNRVVGDHMGMLATVMNGLAMRDALHRAYVNARLMSAIPLKGVCDDYNWAEAISLLKSGRVVIFAAGTGNPFCTTDSAACLRGIEIEAEVVLKGTKVDGVYSEDPMKNPDAVKYDEVTYAEILEKELKVMDLAAFTMARDHDMPILVFNMNKPGALRRVIMGEEEGTLIRAKKVI.

An ATP-binding site is contributed by 15–18; that stretch reads KLSG. Residues 23–28 form an involved in allosteric activation by GTP region; that stretch reads GDEGFG. Gly-57 serves as a coordination point for UMP. Residues Gly-58 and Arg-62 each contribute to the ATP site. Residues Asp-77 and 138-145 each bind UMP; that span reads TGNPFCTT. ATP is bound by residues Thr-165, Tyr-171, and Asp-174.

It belongs to the UMP kinase family. In terms of assembly, homohexamer.

The protein resides in the cytoplasm. The enzyme catalyses UMP + ATP = UDP + ADP. The protein operates within pyrimidine metabolism; CTP biosynthesis via de novo pathway; UDP from UMP (UMPK route): step 1/1. Its activity is regulated as follows. Allosterically activated by GTP. Inhibited by UTP. Its function is as follows. Catalyzes the reversible phosphorylation of UMP to UDP. In Shewanella baltica (strain OS155 / ATCC BAA-1091), this protein is Uridylate kinase.